A 622-amino-acid polypeptide reads, in one-letter code: Auxin efflux carrier component 1 (622 aa).

At 1 to 6 the chain is on the extracellular side; sequence MITAAD. A helical transmembrane segment spans residues 7 to 27; the sequence is FYHVMTAMVPLYVAMILAYGS. Over 28–44 the chain is Cytoplasmic; the sequence is VKWWKIFTPDQCSGINR. A helical membrane pass occupies residues 45–65; it reads FVALFAVPLLSFHFIAANNPY. Val51 is a (indol-3-yl)acetate binding site. Over 66–70 the chain is Extracellular; the sequence is AMNLR. The helical transmembrane segment at 71-91 threads the bilayer; that stretch reads FLAADSLQKVIVLSLLFLWCK. Residues 92-100 lie on the Cytoplasmic side of the membrane; that stretch reads LSRNGSLDW. The helical transmembrane segment at 101 to 121 threads the bilayer; the sequence is TITLFSLSTLPNTLVMGIPLL. Residues Asn112 and Leu114 each coordinate (indol-3-yl)acetate. Residues 122–131 lie on the Extracellular side of the membrane; that stretch reads KGMYGNFSGD. Asn127 is a glycosylation site (N-linked (GlcNAc...) asparagine). The chain crosses the membrane as a helical span at residues 132-152; the sequence is LMVQIVVLQCIIWYTLMLFLF. Residue Tyr145 participates in (indol-3-yl)acetate binding. The Cytoplasmic segment spans residues 153-482; the sequence is EYRGAKLLIS…LIRNPNSYSS (330 aa). Residues Ser209, Ser212, Ser221, and Ser225 each carry the phosphoserine modification. The disordered stretch occupies residues 213–233; that stretch reads RSDIYSRRSQGLSATPRPSNL. Position 227 is a phosphothreonine (Thr227). Ser231 is subject to Phosphoserine. Thr248 is subject to Phosphothreonine. Phosphoserine occurs at positions 252, 253, and 271. The interval 268–362 is disordered; it reads GRNSNFGPGE…PVVGGKRQDG (95 aa). Thr286 is subject to Phosphothreonine. Ser290 is modified (phosphoserine). Positions 298-311 are enriched in low complexity; the sequence is PAKPTAAGTAAGAG. The residue at position 302 (Thr302) is a Phosphothreonine. 3 positions are modified to phosphoserine: Ser317, Ser320, and Ser337. Thr340 is modified (phosphothreonine). Phosphoserine occurs at positions 374, 377, 408, 414, 426, 434, and 446. Residues 483 to 503 traverse the membrane as a helical segment; the sequence is LFGITWSLISFKWNIEMPALI. The Extracellular portion of the chain corresponds to 504–506; the sequence is AKS. Residues 507–527 traverse the membrane as a helical segment; the sequence is ISILSDAGLGMAMFSLGLFMA. Residues 528–541 lie on the Cytoplasmic side of the membrane; the sequence is LNPRIIACGNRRAA. A helical membrane pass occupies residues 542-562; sequence FAAAMRFVVGPAVMLVASYAV. At 563 to 566 the chain is on the extracellular side; the sequence is GLRG. A helical membrane pass occupies residues 567 to 587; it reads VLLHVAIIQAALPQGIVPFVF. (indol-3-yl)acetate contacts are provided by Ile582 and Val583. The Cytoplasmic portion of the chain corresponds to 588-601; it reads AKEYNVHPDILSTA. Residues 602–622 form a helical membrane-spanning segment; sequence VIFGMLIALPITLLYYILLGL.

This sequence belongs to the auxin efflux carrier (TC 2.A.69.1) family. In terms of assembly, homodimer. Interacts with TOPP4. Interacts with FYPP1 and FYPP3. Component of a complex made of PINs (e.g. PIN1 and PIN2), MAB4/MELs (e.g. NPY1/MAB4 and NPY5/MEL1) and AGC kinases (e.g. D6PK and PID) at the plasma membrane. Binds directly to NPY5/MEL1. Expressed at the basal side of elongated parenchymatous xylem cells.

The protein localises to the cell membrane. With respect to regulation, auxin efflux carrier activity is competitively inhibited by naptalamate (N-1-naphthylphthalamic acid, NPA) but activated by D6PK-mediated phosphorylation. Acts as a component of the auxin efflux carrier; this activity is enhanced when activated by D6PK-mediated phosphorylation. Binds auxins including indole-3-acetic acid (IAA), indole-3-butyric acid (IBA), indole-3-propionic acid (IPA) and 4-chloroindole-3-acetic acid (4-Cl-IAA). Seems to be involved in the basipetal auxin transport. Mediates the formation of auxin gradient which is required to ensure correct organogenesis. Coordinated polar localization of PIN1 is directly regulated by the vesicle trafficking process and apical-basal PIN1 polarity also depends on the phosphorylation of conserved serine residues by PID kinase. The ARF-GEF protein GNOM is required for the correct recycling of PIN1 between the plasma membrane and endosomal compartments. Recrutes NPY proteins (e.g. NPY1/MAB4 and NPY5/MEL1) to the plasma membrane in a polar basal localization in root epidermis; this activity is optimized by AGC kinases-mediated (e.g. D6PK and PID) phosphorylation that limits their lateral diffusion-based escape. This chain is Auxin efflux carrier component 1, found in Arabidopsis thaliana (Mouse-ear cress).